The sequence spans 79 residues: UPF0154 protein lwe1321 (79 aa).

The chain crosses the membrane as a helical span at residues 2–22; sequence WIYILVGIICLLAGLAGGFFI. Residues 57–66 show a composition bias toward polar residues; it reads KINQMMSAMN. The interval 57 to 79 is disordered; the sequence is KINQMMSAMNKQQEKEKPKKAKK.

Belongs to the UPF0154 family.

It localises to the cell membrane. The polypeptide is UPF0154 protein lwe1321 (Listeria welshimeri serovar 6b (strain ATCC 35897 / DSM 20650 / CCUG 15529 / CIP 8149 / NCTC 11857 / SLCC 5334 / V8)).